A 95-amino-acid polypeptide reads, in one-letter code: Aspartyl/glutamyl-tRNA(Asn/Gln) amidotransferase subunit C (95 aa).

Belongs to the GatC family. As to quaternary structure, heterotrimer of A, B and C subunits.

The catalysed reaction is L-glutamyl-tRNA(Gln) + L-glutamine + ATP + H2O = L-glutaminyl-tRNA(Gln) + L-glutamate + ADP + phosphate + H(+). The enzyme catalyses L-aspartyl-tRNA(Asn) + L-glutamine + ATP + H2O = L-asparaginyl-tRNA(Asn) + L-glutamate + ADP + phosphate + 2 H(+). In terms of biological role, allows the formation of correctly charged Asn-tRNA(Asn) or Gln-tRNA(Gln) through the transamidation of misacylated Asp-tRNA(Asn) or Glu-tRNA(Gln) in organisms which lack either or both of asparaginyl-tRNA or glutaminyl-tRNA synthetases. The reaction takes place in the presence of glutamine and ATP through an activated phospho-Asp-tRNA(Asn) or phospho-Glu-tRNA(Gln). This is Aspartyl/glutamyl-tRNA(Asn/Gln) amidotransferase subunit C from Bartonella quintana (strain Toulouse) (Rochalimaea quintana).